The primary structure comprises 423 residues: Probable sucrose-phosphate synthase (423 aa).

This sequence belongs to the glycosyltransferase 1 family.

The catalysed reaction is beta-D-fructose 6-phosphate + UDP-alpha-D-glucose = sucrose 6(F)-phosphate + UDP + H(+). Plays a role in sucrose synthesis by catalyzing the first step of sucrose biosynthesis from UDP-glucose and fructose-6-phosphate. This chain is Probable sucrose-phosphate synthase, found in Thermosipho melanesiensis (strain DSM 12029 / CIP 104789 / BI429).